The sequence spans 182 residues: uncharacterized protein (182 aa).

The Macro domain maps to 1 to 177; it reads MEFSVGGVEV…KFLEVFKKHL (177 aa).

This is an uncharacterized protein from Pyrobaculum aerophilum (strain ATCC 51768 / DSM 7523 / JCM 9630 / CIP 104966 / NBRC 100827 / IM2).